The following is a 189-amino-acid chain: HGPRTase-like protein (189 aa).

Belongs to the purine/pyrimidine phosphoribosyltransferase family. Archaeal HPRT subfamily.

Functionally, may catalyze a purine salvage reaction, the substrate is unknown. The polypeptide is HGPRTase-like protein (Halomicrobium mukohataei (strain ATCC 700874 / DSM 12286 / JCM 9738 / NCIMB 13541) (Haloarcula mukohataei)).